Consider the following 219-residue polypeptide: N-(5'-phosphoribosyl)anthranilate isomerase (219 aa).

Belongs to the TrpF family.

The enzyme catalyses N-(5-phospho-beta-D-ribosyl)anthranilate = 1-(2-carboxyphenylamino)-1-deoxy-D-ribulose 5-phosphate. Its pathway is amino-acid biosynthesis; L-tryptophan biosynthesis; L-tryptophan from chorismate: step 3/5. The polypeptide is N-(5'-phosphoribosyl)anthranilate isomerase (Bradyrhizobium sp. (strain BTAi1 / ATCC BAA-1182)).